The following is a 471-amino-acid chain: NALCN channel auxiliary factor 2 (471 aa).

A helical transmembrane segment spans residues L47 to A67. The interval S76–G115 is disordered. Residues P90 to G105 show a composition bias toward pro residues. N120 is a glycosylation site (N-linked (GlcNAc...) asparagine). Disordered stretches follow at residues E158–F178 and H399–R424. Residues T161 to S171 show a composition bias toward pro residues. Residues L432–G452 form a helical membrane-spanning segment.

This sequence belongs to the NALF family.

Its subcellular location is the membrane. Its function is as follows. Probable component of the NALCN channel complex, a channel that regulates the resting membrane potential and controls neuronal excitability. This Mus musculus (Mouse) protein is NALCN channel auxiliary factor 2 (Nalf2).